Consider the following 141-residue polypeptide: Large ribosomal subunit protein uL16 (141 aa).

The protein belongs to the universal ribosomal protein uL16 family. In terms of assembly, part of the 50S ribosomal subunit.

In terms of biological role, binds 23S rRNA and is also seen to make contacts with the A and possibly P site tRNAs. This Campylobacter concisus (strain 13826) protein is Large ribosomal subunit protein uL16.